Here is a 434-residue protein sequence, read N- to C-terminus: Histidinol dehydrogenase (434 aa).

Positions 130, 188, and 211 each coordinate NAD(+). Substrate is bound by residues Ser237, Gln259, and His262. Residues Gln259 and His262 each coordinate Zn(2+). Catalysis depends on proton acceptor residues Glu326 and His327. The substrate site is built by His327, Asp360, Glu414, and His419. Asp360 contributes to the Zn(2+) binding site. Residue His419 participates in Zn(2+) binding.

Belongs to the histidinol dehydrogenase family. In terms of assembly, homodimer. Zn(2+) is required as a cofactor.

The catalysed reaction is L-histidinol + 2 NAD(+) + H2O = L-histidine + 2 NADH + 3 H(+). It participates in amino-acid biosynthesis; L-histidine biosynthesis; L-histidine from 5-phospho-alpha-D-ribose 1-diphosphate: step 9/9. Catalyzes the sequential NAD-dependent oxidations of L-histidinol to L-histidinaldehyde and then to L-histidine. The sequence is that of Histidinol dehydrogenase from Salmonella typhi.